The following is a 307-amino-acid chain: MTEISDLDRQIEQLRRCELIKESEVKALCAKAREILVEESNVQRVDSPVTVCGDIHGQFYDLKELFRVGGDVPETNYLFMGDFVDRGFYSVETFLLLLALKVRYPDRITLIRGNHESRQITQVYGFYDECLRKYGSVTVWRYCTEIFDYLSLSAIIDGKIFCVHGGLSPSIQTLDQIRTIDRKQEVPHDGPMCDLLWSDPEDTTGWGVSPRGAGYLFGSDVVAQFNAANNIDMICRAHQLVMEGYKWHFNETVLTVWSAPNYCYRCGNVAAILELDEHLQKEFIIFEAAPQETRGIPSKKPVADYFL.

Mn(2+) is bound by residues Asp54, His56, Asp82, and Asn114. The Proton donor role is filled by His115. Mn(2+)-binding residues include His164 and His238. Leu307 carries the post-translational modification Leucine methyl ester.

This sequence belongs to the PPP phosphatase family. PP-4 (PP-X) subfamily. In terms of assembly, serine/threonine-protein phosphatase 4 (PP4) occurs in different assemblies of the catalytic and one or more regulatory subunits. Requires Mn(2+) as cofactor.

The protein localises to the cytoplasm. It localises to the nucleus. The protein resides in the cytoskeleton. It is found in the microtubule organizing center. Its subcellular location is the centrosome. The catalysed reaction is O-phospho-L-seryl-[protein] + H2O = L-seryl-[protein] + phosphate. It carries out the reaction O-phospho-L-threonyl-[protein] + H2O = L-threonyl-[protein] + phosphate. Functionally, protein phosphatase that regulates many processes such as microtubule organization at centrosomes. The chain is Serine/threonine-protein phosphatase 4 catalytic subunit (ppp4c) from Xenopus laevis (African clawed frog).